Reading from the N-terminus, the 85-residue chain is Sugar transporter SemiSWEET (85 aa).

A PQ-loop domain is found at 2-59; the sequence is ENLIGYVAAFLTTVSFLPQVLRVVMTKQTRDISRNMYIMFFLGVVLWFVYGILRSDLP. The next 3 membrane-spanning stretches (helical) occupy residues 5-25, 33-53, and 57-77; these read IGYV…LRVV, ISRN…VYGI, and DLPI…ILYY.

Homodimer.

The protein resides in the cell membrane. The homodimer mediates transmembrane sugar transport down a concentration gradient. Transport is probably effected by rocking-type movements, where a cargo-binding cavity opens first on one and then on the other side of the membrane. The polypeptide is Sugar transporter SemiSWEET (Leptospira biflexa serovar Patoc (strain Patoc 1 / ATCC 23582 / Paris)).